The following is a 118-amino-acid chain: UPF0382 membrane protein C1782.12c (118 aa).

An N-terminal signal peptide occupies residues 1–18 (MTIWNVAALTGLLSVGLG). The Lumenal portion of the chain corresponds to 19-40 (AYGSHGLQKRVQDPHLLKSWST). Residues 41-61 (ACTYLMFHSLATMAVSLHPVY) form a helical membrane-spanning segment. Topologically, residues 62–67 (GKSRWT) are cytoplasmic. The chain crosses the membrane as a helical span at residues 68–88 (GPLLITGSCLFSGTIYGLCLL). Over 89-96 (PKGHSLRR) the chain is Lumenal. A helical membrane pass occupies residues 97 to 117 (ILGPLTPIGGLVMLTGWATML). Residue Val118 is a topological domain, cytoplasmic.

Belongs to the UPF0382 family.

It is found in the endoplasmic reticulum membrane. This is UPF0382 membrane protein C1782.12c from Schizosaccharomyces pombe (strain 972 / ATCC 24843) (Fission yeast).